A 159-amino-acid polypeptide reads, in one-letter code: NADH-quinone oxidoreductase subunit B (159 aa).

4 residues coordinate [4Fe-4S] cluster: C32, C33, C97, and C126.

Belongs to the complex I 20 kDa subunit family. As to quaternary structure, NDH-1 is composed of 14 different subunits. Subunits NuoB, C, D, E, F, and G constitute the peripheral sector of the complex. Requires [4Fe-4S] cluster as cofactor.

The protein resides in the cell inner membrane. It carries out the reaction a quinone + NADH + 5 H(+)(in) = a quinol + NAD(+) + 4 H(+)(out). Functionally, NDH-1 shuttles electrons from NADH, via FMN and iron-sulfur (Fe-S) centers, to quinones in the respiratory chain. The immediate electron acceptor for the enzyme in this species is believed to be ubiquinone. Couples the redox reaction to proton translocation (for every two electrons transferred, four hydrogen ions are translocated across the cytoplasmic membrane), and thus conserves the redox energy in a proton gradient. This is NADH-quinone oxidoreductase subunit B from Helicobacter pylori (strain P12).